A 74-amino-acid chain; its full sequence is Protein SlyX homolog (74 aa).

The interval 54–74 (QDRNPDAQEPYSLRDEIPPHY) is disordered.

This sequence belongs to the SlyX family.

The protein is Protein SlyX homolog of Neisseria gonorrhoeae (strain ATCC 700825 / FA 1090).